The following is a 380-amino-acid chain: Chorismate synthase (380 aa).

Arg-49 lines the NADP(+) pocket. Residues Gly-288, 303–307, and Arg-330 contribute to the FMN site; that span reads KPPSS.

The protein belongs to the chorismate synthase family. It depends on FMNH2 as a cofactor.

The enzyme catalyses 5-O-(1-carboxyvinyl)-3-phosphoshikimate = chorismate + phosphate. It functions in the pathway metabolic intermediate biosynthesis; chorismate biosynthesis; chorismate from D-erythrose 4-phosphate and phosphoenolpyruvate: step 7/7. Catalyzes the anti-1,4-elimination of the C-3 phosphate and the C-6 proR hydrogen from 5-enolpyruvylshikimate-3-phosphate (EPSP) to yield chorismate, which is the branch point compound that serves as the starting substrate for the three terminal pathways of aromatic amino acid biosynthesis. This reaction introduces a second double bond into the aromatic ring system. In Aeropyrum pernix (strain ATCC 700893 / DSM 11879 / JCM 9820 / NBRC 100138 / K1), this protein is Chorismate synthase.